Reading from the N-terminus, the 537-residue chain is Glucose-6-phosphate isomerase (537 aa).

The active-site Proton donor is E355. Catalysis depends on residues H386 and K501.

Belongs to the GPI family.

It is found in the cytoplasm. The enzyme catalyses alpha-D-glucose 6-phosphate = beta-D-fructose 6-phosphate. It participates in carbohydrate biosynthesis; gluconeogenesis. It functions in the pathway carbohydrate degradation; glycolysis; D-glyceraldehyde 3-phosphate and glycerone phosphate from D-glucose: step 2/4. Catalyzes the reversible isomerization of glucose-6-phosphate to fructose-6-phosphate. This chain is Glucose-6-phosphate isomerase, found in Protochlamydia amoebophila (strain UWE25).